The following is a 275-amino-acid chain: Dermonecrotic toxin SpaSicTox-betaIIA3 (275 aa).

Residue His5 is part of the active site. The Mg(2+) site is built by Glu25 and Asp27. The active-site Nucleophile is His41. 2 disulfide bridges follow: Cys45–Cys51 and Cys47–Cys190. Asp85 contacts Mg(2+).

It belongs to the arthropod phospholipase D family. Class II subfamily. Mg(2+) serves as cofactor. In terms of tissue distribution, expressed by the venom gland.

The protein resides in the secreted. The enzyme catalyses an N-(acyl)-sphingosylphosphocholine = an N-(acyl)-sphingosyl-1,3-cyclic phosphate + choline. It carries out the reaction an N-(acyl)-sphingosylphosphoethanolamine = an N-(acyl)-sphingosyl-1,3-cyclic phosphate + ethanolamine. It catalyses the reaction a 1-acyl-sn-glycero-3-phosphocholine = a 1-acyl-sn-glycero-2,3-cyclic phosphate + choline. The catalysed reaction is a 1-acyl-sn-glycero-3-phosphoethanolamine = a 1-acyl-sn-glycero-2,3-cyclic phosphate + ethanolamine. Functionally, dermonecrotic toxins cleave the phosphodiester linkage between the phosphate and headgroup of certain phospholipids (sphingolipid and lysolipid substrates), forming an alcohol (often choline) and a cyclic phosphate. This toxin acts on sphingomyelin (SM). It may also act on ceramide phosphoethanolamine (CPE), lysophosphatidylcholine (LPC) and lysophosphatidylethanolamine (LPE), but not on lysophosphatidylserine (LPS), and lysophosphatidylglycerol (LPG). It acts by transphosphatidylation, releasing exclusively cyclic phosphate products as second products. Induces dermonecrosis, hemolysis, increased vascular permeability, edema, inflammatory response, and platelet aggregation. The chain is Dermonecrotic toxin SpaSicTox-betaIIA3 from Sicarius patagonicus (Six-eyed sand spider).